The chain runs to 251 residues: Triosephosphate isomerase (251 aa).

Position 9–11 (9–11 (NWK)) interacts with substrate. The active-site Electrophile is the histidine 95. The active-site Proton acceptor is glutamate 167. Residues glycine 173, serine 213, and 234-235 (GG) contribute to the substrate site. At serine 213 the chain carries Phosphoserine.

It belongs to the triosephosphate isomerase family. As to quaternary structure, homodimer.

It is found in the cytoplasm. The enzyme catalyses D-glyceraldehyde 3-phosphate = dihydroxyacetone phosphate. The protein operates within carbohydrate biosynthesis; gluconeogenesis. It participates in carbohydrate degradation; glycolysis; D-glyceraldehyde 3-phosphate from glycerone phosphate: step 1/1. Functionally, involved in the gluconeogenesis. Catalyzes stereospecifically the conversion of dihydroxyacetone phosphate (DHAP) to D-glyceraldehyde-3-phosphate (G3P). In Bacillus cereus (strain ATCC 10987 / NRS 248), this protein is Triosephosphate isomerase.